Consider the following 412-residue polypeptide: D-nopaline dehydrogenase (412 aa).

It belongs to the lysopine/nopaline/octopine/opine/vitopine dehydrogenases family. In terms of assembly, homotetramer.

It carries out the reaction D-nopaline + NADP(+) + H2O = L-arginine + 2-oxoglutarate + NADPH + H(+). In Agrobacterium vitis (Rhizobium vitis), this protein is D-nopaline dehydrogenase (nos).